The primary structure comprises 128 residues: Pi-hexatoxin-Hi1c (128 aa).

The N-terminal stretch at 1–19 (MKLRITLALTSVLAFCVFG) is a signal peptide. The propeptide occupies 20-47 (DKENENLMENLLEDDLLDIFTDAIHMER). Intrachain disulfides connect Cys-54–Cys-69, Cys-61–Cys-74, Cys-68–Cys-84, Cys-93–Cys-108, Cys-100–Cys-113, and Cys-107–Cys-124. Domain repeat units follow at residues 54–84 (CIAKWKSCAGRKLDCCEGLECWKRRWGHEVC) and 93–124 (CLEKWKSCFERKYDCCEELECWERRGNKHPVC). The tract at residues 54–124 (CIAKWKSCAG…ERRGNKHPVC (71 aa)) is 2 X approximate repeats with cysteine pattern C-C-CC-C-C.

The protein belongs to the psalmotoxin-1 family. Double-knot toxin subfamily. In terms of tissue distribution, expressed by the venom gland.

The protein resides in the secreted. In terms of biological role, this toxin potently and selectively inhibits ASIC1a, an isoform of the gene ASIC1. It incompletely inhibits ASIC1a activation in a pH-independent and slowly reversible manner. This toxin acts by binding to and stabilizing the closed state of the channel, thereby impeding the transition into a conducting state. This toxin may bind to the acidic pocket of ASIC1a, since mutation of a key residue of this pocket (Arg-350) abolishes the ability of the toxin to inhibit ASIC1a. In vivo, this toxin protects the brain from neuronal injury when administered up to 8 hours after stroke onset. The sequence is that of Pi-hexatoxin-Hi1c from Hadronyche infensa (Fraser island funnel-web spider).